Here is a 134-residue protein sequence, read N- to C-terminus: Fluoride-specific ion channel FluC (134 aa).

The next 4 helical transmembrane spans lie at 7–27 (LAVA…TIMA), 38–58 (GTLL…IVLV), 69–89 (LFLF…AAES), and 110–130 (VGSL…LLGH). The Na(+) site is built by Gly-77 and Thr-80.

The protein belongs to the fluoride channel Fluc/FEX (TC 1.A.43) family.

It localises to the cell inner membrane. It catalyses the reaction fluoride(in) = fluoride(out). With respect to regulation, na(+) is not transported, but it plays an essential structural role and its presence is essential for fluoride channel function. Fluoride-specific ion channel. Important for reducing fluoride concentration in the cell, thus reducing its toxicity. This Legionella pneumophila subsp. pneumophila (strain Philadelphia 1 / ATCC 33152 / DSM 7513) protein is Fluoride-specific ion channel FluC.